The chain runs to 1182 residues: MGQQVGRVGEAPGLQQPQPRGIRGSSAARPSGRRRDPAGRTTETGFNIFTQHDHFASCVEDGFEGDKTGGSSPEALHRPYGCDVEPQALNEAIRWSSKENLLGATESDPNLFVALYDFVASGDNTLSITKGEKLRVLGYNQNGEWSEVRSKNGQGWVPSNYITPVNSLEKHSWYHGPVSRSAAEYLLSSLINGSFLVRESESSPGQLSISLRYEGRVYHYRINTTADGKVYVTAESRFSTLAELVHHHSTVADGLVTTLHYPAPKCNKPTVYGVSPIHDKWEMERTDITMKHKLGGGQYGEVYVGVWKKYSLTVAVKTLKEDTMEVEEFLKEAAVMKEIKHPNLVQLLGVCTLEPPFYIVTEYMPYGNLLDYLRECNREEVTAVVLLYMATQISSAMEYLEKKNFIHRDLAARNCLVGENHVVKVADFGLSRLMTGDTYTAHAGAKFPIKWTAPESLAYNTFSIKSDVWAFGVLLWEIATYGMSPYPGIDLSQVYDLLEKGYRMEQPEGCPPKVYELMRACWKWSPADRPSFAETHQAFETMFHDSSISEEVAEELGRAASSSSVVPYLPRLPILPSKTRTLKKQVENKENIEGAQDATENSASSLAPGFIRGAQASSGSPALPRKQRDKSPSSLLEDAKETCFTRDRKGGFFSSFMKKRNAPTPPKRSSSFREMENQPHKKYELTGNFSSVASLQHADGFSFTPAQQEANLVPPKCYGGSFAQRNLCNDDGGGGGGSGTAGGGWSGITGFFTPRLIKKTLGLRAGKPTASDDTSKPFPRSNSTSSMSSGLPEQDRMAMTLPRNCQRSKLQLERTVSTSSQPEENVDRANDMLPKKSEESAAPSRERPKAKLLPRGATALPLRTPSGDLAITEKDPPGVGVAGVAAAPKGKEKNGGARLGMAGVPEDGEQPGWPSPAKAAPVLPTTHNHKVPVLISPTLKHTPADVQLIGTDSQGNKFKLLSEHQVTSSGDKDRPRRVKPKCAPPPPPVMRLLQHPSICSDPTEEPTALTAGQSTSETQEGGKKAALGAVPISGKAGRPVMPPPQVPLPTSSISPAKMANGTAGTKVALRKTKQAAEKISADKISKEALLECADLLSSALTEPVPNSQLVDTGHQLLDYCSGYVDCIPQTRNKFAFREAVSKLELSLQELQVSSAAAGVPGTNPVLNNLLSCVQEISDVVQR.

2 disordered regions span residues methionine 1 to asparagine 47 and glutamate 60 to tyrosine 80. Glycine 2 carries the N-myristoyl glycine lipid modification. Residues glycine 2–glutamate 106 are CAP. Residues arginine 20 to proline 30 are compositionally biased toward low complexity. Serine 97 carries the phosphoserine modification. An SH3 domain is found at serine 107 to serine 167. 6 positions are modified to phosphotyrosine: tyrosine 116, tyrosine 161, tyrosine 174, tyrosine 185, tyrosine 218, and tyrosine 231. In terms of domain architecture, SH2 spans tryptophan 173 to alanine 263. The residue at position 261 (tyrosine 261) is a Phosphotyrosine; by ABL1 and autocatalysis. Tyrosine 272 carries the post-translational modification Phosphotyrosine; by autocatalysis. Position 275 is a phosphoserine (serine 275). Residues isoleucine 288–phenylalanine 539 enclose the Protein kinase domain. Leucine 294–valine 302 contributes to the ATP binding site. Phosphotyrosine is present on residues tyrosine 299 and tyrosine 303. Residues lysine 317 and glutamate 362–asparagine 368 each bind ATP. Aspartate 409 acts as the Proton acceptor in catalysis. Positions aspartate 427–tryptophan 451 match the Kinase activation loop motif. Tyrosine 439 is modified (phosphotyrosine; by autocatalysis and SRC-type Tyr-kinases). Tyrosine 459 is modified (phosphotyrosine). Tyrosine 568 carries the phosphotyrosine; by autocatalysis modification. A disordered region spans residues isoleucine 611–glutamate 641. Serine 620, serine 631, and serine 633 each carry phosphoserine. At aspartate 647 the chain carries Phosphotyrosine. The disordered stretch occupies residues serine 654–glutamate 674. Serine 655 is modified (phosphoserine). The Nuclear localization signal signature appears at lysine 658–arginine 660. Phosphotyrosine occurs at positions 662 and 668. Phosphoserine occurs at positions 669, 670, and 671. Tyrosine 683 and tyrosine 718 each carry phosphotyrosine. Phosphotyrosine; by autocatalysis is present on tyrosine 683. An F-actin-binding region spans residues serine 694–lysine 930. Residues leucine 763–glutamine 794 are disordered. Lysine 776 is subject to N6-acetyllysine. Residues arginine 780–leucine 791 show a composition bias toward polar residues. Residue serine 783 is modified to Phosphoserine. Threonine 800 is modified (phosphothreonine). Residues arginine 807–glutamate 823 are compositionally biased toward polar residues. The disordered stretch occupies residues arginine 807–lysine 851. Serine 817 and serine 820 each carry phosphoserine. The span at asparagine 825 to lysine 849 shows a compositional bias: basic and acidic residues. 2 positions are modified to phosphoserine: serine 915 and serine 936. The tract at residues histidine 964–lysine 1024 is disordered. Residues threonine 1010–glutamine 1019 are compositionally biased toward polar residues. An F-actin-binding region spans residues glutamate 1020–arginine 1182.

Belongs to the protein kinase superfamily. Tyr protein kinase family. ABL subfamily. As to quaternary structure, interacts with PSMA7. Interacts with CTTN. Found in a complex with ABL1, ABL2, CRK and UNC119; leading to the inhibition of CRK phosphorylation by ABL kinases. Requires Mg(2+) as cofactor. The cofactor is Mn(2+). Post-translationally, phosphorylated at Tyr-261 by ABL1 in response to oxidative stress. Phosphorylated by PDGFRB. Polyubiquitinated. Polyubiquitination of ABL2 leads to degradation. Widely expressed.

The protein localises to the cytoplasm. It is found in the cytoskeleton. The catalysed reaction is L-tyrosyl-[protein] + ATP = O-phospho-L-tyrosyl-[protein] + ADP + H(+). Stabilized in the inactive form by an association between the SH3 domain and the SH2-TK linker region, interactions of the N-terminal cap, and contributions from an N-terminal myristoyl group and phospholipids. Activated by autophosphorylation as well as by SRC-family kinase-mediated phosphorylation. Activated by RIN1 binding to the SH2 and SH3 domains. Inhibited by imatinib mesylate (Gleevec) which is used for the treatment of chronic myeloid leukemia (CML). Phosphatidylinositol 4,5-bisphosphate (PIP2), a highly abundant phosphoinositide known to regulate cytoskeletal and membrane proteins, inhibits the tyrosine kinase activity. Functionally, non-receptor tyrosine-protein kinase that plays an ABL1-overlapping role in key processes linked to cell growth and survival such as cytoskeleton remodeling in response to extracellular stimuli, cell motility and adhesion and receptor endocytosis. Coordinates actin remodeling through tyrosine phosphorylation of proteins controlling cytoskeleton dynamics like MYH10 (involved in movement); CTTN (involved in signaling); or TUBA1 and TUBB (microtubule subunits). Binds directly F-actin and regulates actin cytoskeletal structure through its F-actin-bundling activity. Involved in the regulation of cell adhesion and motility through phosphorylation of key regulators of these processes such as CRK, CRKL, DOK1 or ARHGAP35. Adhesion-dependent phosphorylation of ARHGAP35 promotes its association with RASA1, resulting in recruitment of ARHGAP35 to the cell periphery where it inhibits RHO. Phosphorylates multiple receptor tyrosine kinases like PDGFRB and other substrates which are involved in endocytosis regulation such as RIN1. In brain, may regulate neurotransmission by phosphorylating proteins at the synapse. ABL2 also acts as a regulator of multiple pathological signaling cascades during infection. Pathogens can highjack ABL2 kinase signaling to reorganize the host actin cytoskeleton for multiple purposes, like facilitating intracellular movement and host cell exit. Finally, functions as its own regulator through autocatalytic activity as well as through phosphorylation of its inhibitor, ABI1. Positively regulates chemokine-mediated T-cell migration, polarization, and homing to lymph nodes and immune-challenged tissues, potentially via activation of NEDD9/HEF1 and RAP1. In Homo sapiens (Human), this protein is Tyrosine-protein kinase ABL2 (ABL2).